We begin with the raw amino-acid sequence, 127 residues long: Apolipoprotein C-IV (127 aa).

The signal sequence occupies residues 1–27 (MSLLRNRLQDLPALCLCVLVLACIGAC).

This sequence belongs to the apolipoprotein C4 family.

The protein localises to the secreted. Functionally, may participate in lipoprotein metabolism. This Papio hamadryas (Hamadryas baboon) protein is Apolipoprotein C-IV (APOC4).